A 186-amino-acid polypeptide reads, in one-letter code: Protein GrpE (186 aa).

Positions 1–22 are enriched in basic and acidic residues; that stretch reads MSDSNKEKKKKFADMVSKRKGD. The interval 1–35 is disordered; the sequence is MSDSNKEKKKKFADMVSKRKGDDQEDQQTGDLSEE. Positions 23-34 are enriched in acidic residues; the sequence is DQEDQQTGDLSE.

This sequence belongs to the GrpE family. Homodimer.

The protein resides in the cytoplasm. In terms of biological role, participates actively in the response to hyperosmotic and heat shock by preventing the aggregation of stress-denatured proteins, in association with DnaK and GrpE. It is the nucleotide exchange factor for DnaK and may function as a thermosensor. Unfolded proteins bind initially to DnaJ; upon interaction with the DnaJ-bound protein, DnaK hydrolyzes its bound ATP, resulting in the formation of a stable complex. GrpE releases ADP from DnaK; ATP binding to DnaK triggers the release of the substrate protein, thus completing the reaction cycle. Several rounds of ATP-dependent interactions between DnaJ, DnaK and GrpE are required for fully efficient folding. The protein is Protein GrpE of Wolbachia pipientis subsp. Culex pipiens (strain wPip).